A 529-amino-acid chain; its full sequence is Glycylpeptide N-tetradecanoyltransferase 2 (529 aa).

The interval 1–82 (MAEDSESAAS…QEIKIQQSSK (82 aa)) is disordered. The span at 15–32 (ELDDQDTCGIDGDNEEET) shows a compositional bias: acidic residues. Ser38 carries the post-translational modification Phosphoserine. The segment covering 46 to 57 (KKKKKKQKRKKE) has biased composition (basic residues). The segment covering 61–82 (SGGTKSDSASDSQEIKIQQSSK) has biased composition (polar residues). The tetradecanoyl-CoA site is built by Trp153, Leu281, Val283, Ser289, Arg291, Val292, and Ala293.

This sequence belongs to the NMT family.

It is found in the cytoplasm. Its subcellular location is the membrane. It catalyses the reaction N-terminal glycyl-[protein] + tetradecanoyl-CoA = N-tetradecanoylglycyl-[protein] + CoA + H(+). The enzyme catalyses N-terminal glycyl-L-lysyl-[protein] + tetradecanoyl-CoA = N-terminal glycyl-(N(6)-tetradecanoyl)-L-lysyl-[protein] + CoA + H(+). Its function is as follows. Adds a myristoyl group to the N-terminal glycine residue of certain cellular and viral proteins. Also able to mediate N-terminal lysine myristoylation of proteins: catalyzes myristoylation of ARF6 on both 'Gly-2' and 'Lys-3'. Lysine myristoylation is required to maintain ARF6 on membranes during the GTPase cycle. The polypeptide is Glycylpeptide N-tetradecanoyltransferase 2 (Nmt2) (Mus musculus (Mouse)).